Reading from the N-terminus, the 91-residue chain is Large ribosomal subunit protein uL23 (91 aa).

Belongs to the universal ribosomal protein uL23 family. Part of the 50S ribosomal subunit. Contacts protein L29, and trigger factor when it is bound to the ribosome.

In terms of biological role, one of the early assembly proteins it binds 23S rRNA. One of the proteins that surrounds the polypeptide exit tunnel on the outside of the ribosome. Forms the main docking site for trigger factor binding to the ribosome. This is Large ribosomal subunit protein uL23 from Staphylococcus haemolyticus (strain JCSC1435).